Reading from the N-terminus, the 567-residue chain is Urease subunit alpha (567 aa).

The region spanning Gly129–Phe567 is the Urease domain. Residues His134, His136, and Lys217 each contribute to the Ni(2+) site. Residue Lys217 is modified to N6-carboxylysine. His219 is a substrate binding site. Ni(2+) contacts are provided by His246 and His272. The Proton donor role is filled by His320. Asp360 lines the Ni(2+) pocket.

It belongs to the metallo-dependent hydrolases superfamily. Urease alpha subunit family. Heterotrimer of UreA (gamma), UreB (beta) and UreC (alpha) subunits. Three heterotrimers associate to form the active enzyme. It depends on Ni cation as a cofactor. Post-translationally, carboxylation allows a single lysine to coordinate two nickel ions.

The protein resides in the cytoplasm. The catalysed reaction is urea + 2 H2O + H(+) = hydrogencarbonate + 2 NH4(+). Its pathway is nitrogen metabolism; urea degradation; CO(2) and NH(3) from urea (urease route): step 1/1. The polypeptide is Urease subunit alpha (Pseudomonas putida (strain ATCC 47054 / DSM 6125 / CFBP 8728 / NCIMB 11950 / KT2440)).